The sequence spans 696 residues: UvrABC system protein C (696 aa).

The 80-residue stretch at 16-95 folds into the GIY-YIG domain; the sequence is TEPGVYKFRD…IKRFDPRFNV (80 aa). In terms of domain architecture, UVR spans 208–243; it reads DKVTRKLNADMMAAAEELDFERAARLRDDLEAIDKV.

This sequence belongs to the UvrC family. In terms of assembly, interacts with UvrB in an incision complex.

Its subcellular location is the cytoplasm. In terms of biological role, the UvrABC repair system catalyzes the recognition and processing of DNA lesions. UvrC both incises the 5' and 3' sides of the lesion. The N-terminal half is responsible for the 3' incision and the C-terminal half is responsible for the 5' incision. The sequence is that of UvrABC system protein C from Corynebacterium glutamicum (strain R).